Consider the following 107-residue polypeptide: ESAT-6-like protein EsxD (107 aa).

The protein belongs to the WXG100 family. CFP-10 subfamily.

It is found in the secreted. The protein is ESAT-6-like protein EsxD of Mycobacterium tuberculosis (strain ATCC 25618 / H37Rv).